The chain runs to 255 residues: Hydroxyacylglutathione hydrolase (255 aa).

Residues H56, H58, D60, H61, H114, D133, and H171 each contribute to the Zn(2+) site.

The protein belongs to the metallo-beta-lactamase superfamily. Glyoxalase II family. As to quaternary structure, monomer. Requires Zn(2+) as cofactor.

It carries out the reaction an S-(2-hydroxyacyl)glutathione + H2O = a 2-hydroxy carboxylate + glutathione + H(+). The protein operates within secondary metabolite metabolism; methylglyoxal degradation; (R)-lactate from methylglyoxal: step 2/2. Thiolesterase that catalyzes the hydrolysis of S-D-lactoyl-glutathione to form glutathione and D-lactic acid. The protein is Hydroxyacylglutathione hydrolase of Rhodopseudomonas palustris (strain BisA53).